The primary structure comprises 267 residues: Thyroxine 5-deiodinase (267 aa).

Over 1 to 15 (MHDSGGVQMARALKH) the chain is Cytoplasmic. Residues 16–36 (AALCLMLLPRFLLAAVMLWLL) traverse the membrane as a helical; Signal-anchor for type II membrane protein segment. The Extracellular segment spans residues 37-267 (DFLCIRKKVL…VNSQTAVLHV (231 aa)). U131 is an active-site residue. U131 is a non-standard amino acid (selenocysteine).

This sequence belongs to the iodothyronine deiodinase family. Monomer. Homodimer. May undergo minor heretodimerization with DIO1 and DIO2.

It is found in the cell membrane. It localises to the endosome membrane. The enzyme catalyses 3,3',5'-triiodo-L-thyronine + iodide + A + H(+) = L-thyroxine + AH2. It catalyses the reaction 3,3'-diiodo-L-thyronine + iodide + A + H(+) = 3,3',5-triiodo-L-thyronine + AH2. It carries out the reaction 3-iodo-L-thyronine + iodide + A + H(+) = 3,5-diiodo-L-thyronine + AH2. The catalysed reaction is L-thyronine + iodide + A + H(+) = 3-iodo-L-thyronine + AH2. The enzyme catalyses 3',5'-diiodo-L-thyronine + iodide + A + H(+) = 3,3',5'-triiodo-L-thyronine + AH2. It catalyses the reaction 3'-iodo-L-thyronine + iodide + A + H(+) = 3,3'-diiodo-L-thyronine + AH2. It carries out the reaction 3,3',5'-triiodothyronamine + iodide + A + H(+) = 3,3',5,5'-tetraiodothyronamine + AH2. The catalysed reaction is 3',5'-diiodothyronamine + iodide + A + H(+) = 3,3',5'-triiodothyronamine + AH2. The enzyme catalyses 3,3'-diiodothyronamine + iodide + A + H(+) = 3,3',5-triiodothyronamine + AH2. It catalyses the reaction 3-iodothyronamine + iodide + A + H(+) = 3,5-diiodothyronamine + AH2. It carries out the reaction 3'-iodothyronamine + iodide + A + H(+) = 3,3'-diiodothyronamine + AH2. The catalysed reaction is thyronamine + iodide + A + H(+) = 3-iodothyronamine + AH2. Functionally, plays a crucial role in the metabolism of thyroid hormones (TH) and has specific roles in TH activation and inactivation by deiodination. Catalyzes the deiodination of L-thyroxine (T4) to 3,3',5'-triiodothyronine (rT3), 3,5,3'-triiodothyronine (T3) to 3,3'-diiodothyronine (3,3'-T2), 3,5-diiodothyronine (3,5-T2) to 3-monoiodothyronine (3-T1), rT3 to 3',5'-diiodothyronine (3',5'-T2) and 3,3'-T2 to 3'-monoiodothyronine (3'-T1) via inner-ring deiodination (IRD). Catalyzes the deiodination of 3-T1 to L-thyronine (T0) via outer-ring deiodination (ORD). Catalyzes the tyrosyl ring deiodinations of 3,3',5,5'-tetraiodothyronamine, 3,3',5'-triiodothyronamine, 3,5,3'-triiodothyronamine, 3,5-diiodothyronamine, 3,3'-diiodothyronamine and 3-iodothyronamine. This chain is Thyroxine 5-deiodinase (dio3), found in Sparus aurata (Gilthead sea bream).